We begin with the raw amino-acid sequence, 145 residues long: AP-2 complex subunit sigma (145 aa).

This sequence belongs to the adaptor complexes small subunit family. Adaptor protein complex 2 (AP-2) is a heterotetramer composed of two large adaptins (alpha-type subunit apl3 and beta-type subunit apl1), a medium chain (mu-type subunit apm4) and a small adaptin (sigma-type subunit aps2).

It is found in the cell membrane. It localises to the membrane. Its subcellular location is the coated pit. In terms of biological role, component of the adaptor complexes which link clathrin to receptors in coated vesicles. Clathrin-associated protein complexes are believed to interact with the cytoplasmic tails of membrane proteins, leading to their selection and concentration. The chain is AP-2 complex subunit sigma (aps2) from Emericella nidulans (strain FGSC A4 / ATCC 38163 / CBS 112.46 / NRRL 194 / M139) (Aspergillus nidulans).